A 438-amino-acid polypeptide reads, in one-letter code: Aspartate--tRNA(Asp/Asn) ligase (438 aa).

Glu-176 serves as a coordination point for L-aspartate. The tract at residues 198–201 (QLYK) is aspartate. Arg-220 serves as a coordination point for L-aspartate. ATP-binding positions include 220–222 (RAE), 228–230 (RHL), and Glu-361. Mg(2+)-binding residues include Glu-361 and Ser-364. The L-aspartate site is built by Ser-364 and Arg-368. 409–412 (GADR) contributes to the ATP binding site.

It belongs to the class-II aminoacyl-tRNA synthetase family. Type 2 subfamily. In terms of assembly, homodimer. Requires Mg(2+) as cofactor.

The protein localises to the cytoplasm. It carries out the reaction tRNA(Asx) + L-aspartate + ATP = L-aspartyl-tRNA(Asx) + AMP + diphosphate. Functionally, aspartyl-tRNA synthetase with relaxed tRNA specificity since it is able to aspartylate not only its cognate tRNA(Asp) but also tRNA(Asn). Reaction proceeds in two steps: L-aspartate is first activated by ATP to form Asp-AMP and then transferred to the acceptor end of tRNA(Asp/Asn). This is Aspartate--tRNA(Asp/Asn) ligase from Methanococcus maripaludis (strain DSM 14266 / JCM 13030 / NBRC 101832 / S2 / LL).